The primary structure comprises 636 residues: MAEETRQSKLAAAKRKLKEYWQRNSPGVPAGAKRNRKTNGSIHETATSGGCHSPGDSATGIHGESPTSSATLKDLESPCQELAVVPDSRSVKVSQLKNTIKSLKQQNKQVEHQLEEEKKANNEKQKAERELEVQIQRLNIQKGKLNTDLYHTKRSLRYFEEESKDLAVRLQHSLQRKGELERALSAVTATQKKKAERQFSSRSKARMEWKLEQSMREQALLKAQLTQLKESLKEVQLERDEYAEHLKGERARWQQRMRKMSQEVCSLKKEKKHDKYRVEKLERSLSKLKHQMAEPLPPEPPAVPSEVELQHLRKELERVAGELQAQVEYNQRISLLNEGQKERLREQEERLQEQQERLPEQEERLQQLAEPQNSFKELNNENKSVLQLEQQVKELQEKLGKERLEAASQQKQQLTAQLSLMALPGEGDGGGHLDSEGEEAPRPIPSIPQDLESREAMSGFMDHLEEKADLSELVEKEELGFFQYYRERCHQKVYHPITKPGGSAKDAAPGGGHHQAGPGQGGDEGEAAGAAGDGVAAGGDYKGHSKFLVTAQNPAHEPSPGAPAPQELGAAHKHGDLCEVSLTDSVEPVQGEAREGSPHDNPTAQPIVQDHQEHPGLGSNCCVPFFCWAWLPRRRR.

Disordered stretches follow at residues 1-72 (MAEE…SATL) and 107-127 (NKQVEHQLEEEKKANNEKQKA). Residues 38–50 (TNGSIHETATSGG) show a composition bias toward polar residues. Coiled coils occupy residues 93-148 (VSQL…LNTD), 211-263 (LEQS…MSQE), and 306-412 (EVEL…QQKQ). Residues 109-127 (QVEHQLEEEKKANNEKQKA) are compositionally biased toward basic and acidic residues. Disordered regions lie at residues 344–364 (LREQEERLQEQQERLPEQEER), 422–449 (ALPGEGDGGGHLDSEGEEAPRPIPSIPQ), 496–537 (PITK…GVAA), and 588–612 (PVQGEAREGSPHDNPTAQPIVQDHQ). Basic and acidic residues predominate over residues 429 to 441 (GGGHLDSEGEEAP). Positions 509 to 522 (PGGGHHQAGPGQGG) are enriched in gly residues.

The protein belongs to the GOLGA8 family.

The sequence is that of Golgin subfamily A member 8F from Homo sapiens (Human).